We begin with the raw amino-acid sequence, 90 residues long: DNA-binding protein HRm (90 aa).

This sequence belongs to the bacterial histone-like protein family.

Its function is as follows. Histone-like DNA-binding protein which is capable of wrapping DNA to stabilize it, and thus to prevent its denaturation under extreme environmental conditions. The protein is DNA-binding protein HRm (hupB) of Rhizobium meliloti (strain 1021) (Ensifer meliloti).